The chain runs to 250 residues: Global transcriptional regulator CodY (250 aa).

A GAF domain region spans residues 1-147; sequence MSTLLEKTRK…GATVVGLEIL (147 aa). The segment at residues 195 to 214 is a DNA-binding region (H-T-H motif); sequence ASKIADKVGITRSVIVNALR.

This sequence belongs to the CodY family.

The protein resides in the cytoplasm. Functionally, DNA-binding global transcriptional regulator which is involved in the adaptive response to starvation and acts by directly or indirectly controlling the expression of numerous genes in response to nutrient availability. During rapid exponential growth, CodY is highly active and represses genes whose products allow adaptation to nutrient depletion. In Thermoanaerobacter sp. (strain X514), this protein is Global transcriptional regulator CodY.